We begin with the raw amino-acid sequence, 324 residues long: Probable fructokinase-5 (324 aa).

This sequence belongs to the carbohydrate kinase PfkB family.

The catalysed reaction is D-fructose + ATP = D-fructose 6-phosphate + ADP + H(+). The protein operates within glycan biosynthesis; starch biosynthesis. In terms of biological role, may play an important role in maintaining the flux of carbon towards starch formation. In Arabidopsis thaliana (Mouse-ear cress), this protein is Probable fructokinase-5.